The chain runs to 495 residues: UDP-N-acetylmuramoyl-L-alanyl-D-glutamate--2,6-diaminopimelate ligase (495 aa).

Serine 29 serves as a coordination point for UDP-N-acetyl-alpha-D-muramoyl-L-alanyl-D-glutamate. 111–117 (GTNGKTS) contacts ATP. Residues 153–154 (TT), serine 180, glutamine 186, and arginine 188 each bind UDP-N-acetyl-alpha-D-muramoyl-L-alanyl-D-glutamate. Lysine 220 is modified (N6-carboxylysine). Meso-2,6-diaminopimelate contacts are provided by residues arginine 384, 408–411 (DNPR), glycine 459, and glutamate 463. The short motif at 408 to 411 (DNPR) is the Meso-diaminopimelate recognition motif element.

It belongs to the MurCDEF family. MurE subfamily. Requires Mg(2+) as cofactor. Post-translationally, carboxylation is probably crucial for Mg(2+) binding and, consequently, for the gamma-phosphate positioning of ATP.

It localises to the cytoplasm. It catalyses the reaction UDP-N-acetyl-alpha-D-muramoyl-L-alanyl-D-glutamate + meso-2,6-diaminopimelate + ATP = UDP-N-acetyl-alpha-D-muramoyl-L-alanyl-gamma-D-glutamyl-meso-2,6-diaminopimelate + ADP + phosphate + H(+). It participates in cell wall biogenesis; peptidoglycan biosynthesis. Its function is as follows. Catalyzes the addition of meso-diaminopimelic acid to the nucleotide precursor UDP-N-acetylmuramoyl-L-alanyl-D-glutamate (UMAG) in the biosynthesis of bacterial cell-wall peptidoglycan. The polypeptide is UDP-N-acetylmuramoyl-L-alanyl-D-glutamate--2,6-diaminopimelate ligase (Xylella fastidiosa (strain Temecula1 / ATCC 700964)).